The sequence spans 145 residues: Nucleoside diphosphate kinase (145 aa).

ATP is bound by residues Lys-11, Phe-59, Arg-87, Thr-93, Arg-104, and Asn-114. The active-site Pros-phosphohistidine intermediate is His-117.

This sequence belongs to the NDK family. It depends on Mg(2+) as a cofactor.

Its subcellular location is the cytoplasm. It carries out the reaction a 2'-deoxyribonucleoside 5'-diphosphate + ATP = a 2'-deoxyribonucleoside 5'-triphosphate + ADP. It catalyses the reaction a ribonucleoside 5'-diphosphate + ATP = a ribonucleoside 5'-triphosphate + ADP. Its function is as follows. Major role in the synthesis of nucleoside triphosphates other than ATP. The ATP gamma phosphate is transferred to the NDP beta phosphate via a ping-pong mechanism, using a phosphorylated active-site intermediate. The chain is Nucleoside diphosphate kinase from Sulfolobus acidocaldarius (strain ATCC 33909 / DSM 639 / JCM 8929 / NBRC 15157 / NCIMB 11770).